Consider the following 154-residue polypeptide: Large ribosomal subunit protein uL22 (154 aa).

Belongs to the universal ribosomal protein uL22 family. As to quaternary structure, part of the 50S ribosomal subunit.

This protein binds specifically to 23S rRNA. It makes multiple contacts with different domains of the 23S rRNA in the assembled 50S subunit and ribosome. In terms of biological role, the globular domain of the protein is located near the polypeptide exit tunnel on the outside of the subunit, while an extended beta-hairpin is found that lines the wall of the exit tunnel in the center of the 70S ribosome. This is Large ribosomal subunit protein uL22 from Natronomonas pharaonis (strain ATCC 35678 / DSM 2160 / CIP 103997 / JCM 8858 / NBRC 14720 / NCIMB 2260 / Gabara) (Halobacterium pharaonis).